The primary structure comprises 177 residues: Acireductone dioxygenase (177 aa).

Fe(2+) is bound by residues H97, H99, E103, and H141. Ni(2+)-binding residues include H97, H99, E103, and H141.

Belongs to the acireductone dioxygenase (ARD) family. Monomer. Fe(2+) is required as a cofactor. The cofactor is Ni(2+).

It catalyses the reaction 1,2-dihydroxy-5-(methylsulfanyl)pent-1-en-3-one + O2 = 3-(methylsulfanyl)propanoate + CO + formate + 2 H(+). The enzyme catalyses 1,2-dihydroxy-5-(methylsulfanyl)pent-1-en-3-one + O2 = 4-methylsulfanyl-2-oxobutanoate + formate + 2 H(+). The protein operates within amino-acid biosynthesis; L-methionine biosynthesis via salvage pathway; L-methionine from S-methyl-5-thio-alpha-D-ribose 1-phosphate: step 5/6. Its function is as follows. Catalyzes 2 different reactions between oxygen and the acireductone 1,2-dihydroxy-3-keto-5-methylthiopentene (DHK-MTPene) depending upon the metal bound in the active site. Fe-containing acireductone dioxygenase (Fe-ARD) produces formate and 2-keto-4-methylthiobutyrate (KMTB), the alpha-ketoacid precursor of methionine in the methionine recycle pathway. Ni-containing acireductone dioxygenase (Ni-ARD) produces methylthiopropionate, carbon monoxide and formate, and does not lie on the methionine recycle pathway. The polypeptide is Acireductone dioxygenase (Leptospira biflexa serovar Patoc (strain Patoc 1 / ATCC 23582 / Paris)).